The sequence spans 492 residues: MTDLTSLTLAEARDGLAAKSFSSLQLTDAHLAAIEAARVLNAFVLETPDQARSMAKAADAKIAKGEGGPLEGLPLGIKDLFATSGVRTTACSKILDDFTPPYESTVTSQLWRDGAVLLGKLNNDEFAMGSSNETSCFGPVVNPWRREGSDAKLVPGGSSGGSASAVAAGLCLGATATDTGGSIRQPAAFTGTVGIKPTYGRCSRWGIVAFASSLDQAGPIARTVRDSAILLRSMAGYDAKDTTSVDRAVPDYEAAVGRSVKGMKIGIPKEYRIGGMPAEIEALWKQGADWLKAAGAELVEVSLPHTKYALPAYYIVAPAEASSNLARYDGVRYGARVNGRNITEMYENTRAQGFGAEVIRRIMIGTYVLSAGYYDAYYLRAQKVRTLIKRDFEECFAKGVSAILTPATPSAAFGIGEKGGADPVEMYLNDIFTVTVNMAGLPGIAVPAGRDSQGLPLGLQLIGRPFDEETLFSLGEVIEQAAGRFTAAKWWI.

Residues K78 and S158 each act as charge relay system in the active site. Residue S182 is the Acyl-ester intermediate of the active site.

This sequence belongs to the amidase family. GatA subfamily. Heterotrimer of A, B and C subunits.

It catalyses the reaction L-glutamyl-tRNA(Gln) + L-glutamine + ATP + H2O = L-glutaminyl-tRNA(Gln) + L-glutamate + ADP + phosphate + H(+). In terms of biological role, allows the formation of correctly charged Gln-tRNA(Gln) through the transamidation of misacylated Glu-tRNA(Gln) in organisms which lack glutaminyl-tRNA synthetase. The reaction takes place in the presence of glutamine and ATP through an activated gamma-phospho-Glu-tRNA(Gln). In Rhodopseudomonas palustris (strain BisB18), this protein is Glutamyl-tRNA(Gln) amidotransferase subunit A.